A 291-amino-acid polypeptide reads, in one-letter code: G1/S-specific cyclin-D2 (291 aa).

Residues Gln264–Leu291 form a disordered region. A Phosphothreonine modification is found at Thr282.

The protein belongs to the cyclin family. Cyclin D subfamily. As to quaternary structure, interacts with the CDK4 and CDK6 protein kinases to form a serine/threonine kinase holoenzyme complex. The cyclin subunit imparts substrate specificity to the complex. Phosphorylation at Thr-282 by MAP kinases is required for ubiquitination and degradation by the DCX(AMBRA1) complex. In terms of processing, ubiquitinated by the DCX(AMBRA1) complex during the transition from G1 to S cell phase, leading to its degradation: ubiquitination is dependent on Thr-282 phosphorylation. The DCX(AMBRA1) complex represents the major regulator of CCND2 stability during the G1/S transition.

The protein resides in the nucleus. Its subcellular location is the cytoplasm. It is found in the nucleus membrane. Functionally, regulatory component of the cyclin D2-CDK4 (DC) complex that phosphorylates and inhibits members of the retinoblastoma (RB) protein family including RB1 and regulates the cell-cycle during G(1)/S transition. Phosphorylation of RB1 allows dissociation of the transcription factor E2F from the RB/E2F complex and the subsequent transcription of E2F target genes which are responsible for the progression through the G(1) phase. Hypophosphorylates RB1 in early G(1) phase. Cyclin D-CDK4 complexes are major integrators of various mitogenenic and antimitogenic signals. This is G1/S-specific cyclin-D2 (CCND2) from Gallus gallus (Chicken).